The chain runs to 154 residues: Probable prefoldin subunit 5 (154 aa).

Belongs to the prefoldin subunit alpha family. Heterohexamer of two PFD-alpha type and four PFD-beta type subunits. Interacts with byr1.

The protein localises to the cytoplasm. Its function is as follows. Binds specifically to cytosolic chaperonin (c-CPN) and transfers target proteins to it. Binds to nascent polypeptide chain and promotes folding in an environment in which there are many competing pathways for nonnative proteins. Required for normal cytoskeletal function and when bound to byr1, is involved in the regulation of sexual differentiation. This is Probable prefoldin subunit 5 (bob1) from Schizosaccharomyces pombe (strain 972 / ATCC 24843) (Fission yeast).